The chain runs to 136 residues: Phospholipase A2 (136 aa).

Ca(2+) contacts are provided by Trp-8, Gly-10, and Gly-12. 5 disulfides stabilise this stretch: Cys-9–Cys-31, Cys-30–Cys-70, Cys-37–Cys-63, Cys-61–Cys-95, and Cys-105–Cys-115. N-linked (GlcNAc...) asparagine glycosylation occurs at Asn-16. His-34 is an active-site residue. Position 35 (Asp-35) interacts with Ca(2+). Asp-64 is an active-site residue.

Belongs to the phospholipase A2 family. Requires Ca(2+) as cofactor. As to expression, expressed by the venom gland.

Its subcellular location is the secreted. The enzyme catalyses a 1,2-diacyl-sn-glycero-3-phosphocholine + H2O = a 1-acyl-sn-glycero-3-phosphocholine + a fatty acid + H(+). In terms of biological role, PLA2 catalyzes the calcium-dependent hydrolysis of the 2-acyl groups in 3-sn-phosphoglycerides. The protein is Phospholipase A2 of Bombus pensylvanicus (American bumblebee).